The primary structure comprises 226 residues: UPF0758 protein gbs1168 (226 aa).

The MPN domain maps to 103-225 (QILSSEQLAR…YYSFREEADI (123 aa)). Residues His-174, His-176, and Asp-187 each contribute to the Zn(2+) site. The JAMM motif signature appears at 174–187 (HNHPSGSPNPSESD).

It belongs to the UPF0758 family.

The chain is UPF0758 protein gbs1168 from Streptococcus agalactiae serotype III (strain NEM316).